We begin with the raw amino-acid sequence, 316 residues long: tRNA dimethylallyltransferase (316 aa).

17-24 (GPTASGKT) contributes to the ATP binding site. Position 19-24 (19-24 (TASGKT)) interacts with substrate. 4 interaction with substrate tRNA regions span residues 42–45 (DSAL), 166–170 (QRLSR), 247–252 (RCVGYR), and 280–287 (KRQITWLR).

It belongs to the IPP transferase family. In terms of assembly, monomer. It depends on Mg(2+) as a cofactor.

It catalyses the reaction adenosine(37) in tRNA + dimethylallyl diphosphate = N(6)-dimethylallyladenosine(37) in tRNA + diphosphate. Functionally, catalyzes the transfer of a dimethylallyl group onto the adenine at position 37 in tRNAs that read codons beginning with uridine, leading to the formation of N6-(dimethylallyl)adenosine (i(6)A). This Escherichia fergusonii (strain ATCC 35469 / DSM 13698 / CCUG 18766 / IAM 14443 / JCM 21226 / LMG 7866 / NBRC 102419 / NCTC 12128 / CDC 0568-73) protein is tRNA dimethylallyltransferase.